Here is a 569-residue protein sequence, read N- to C-terminus: Phenylalanine ammonia-lyase (569 aa).

Catalysis depends on Tyr-78, which acts as the Proton donor/acceptor. A cross-link (5-imidazolinone (Ala-Gly)) is located at residues 167 to 169 (ASG). Position 168 is a 2,3-didehydroalanine (Ser) (Ser-168). Residues Asn-223, Gln-311, Arg-317, Asn-347, Lys-419, Glu-448, and Asn-451 each coordinate (E)-cinnamate.

Belongs to the PAL/histidase family. In terms of assembly, homotetramer. Post-translationally, contains an active site 4-methylidene-imidazol-5-one (MIO), which is formed autocatalytically by cyclization and dehydration of residues Ala-Ser-Gly.

It localises to the cytoplasm. It carries out the reaction L-phenylalanine = (E)-cinnamate + NH4(+). The protein operates within phenylpropanoid metabolism; trans-cinnamate biosynthesis; trans-cinnamate from L-phenylalanine: step 1/1. Catalyzes the non-oxidative deamination of L-phenylalanine to form trans-cinnamic acid, the first step in the phenylpropanoid pathway. This is Phenylalanine ammonia-lyase from Nostoc punctiforme (strain ATCC 29133 / PCC 73102).